Reading from the N-terminus, the 144-residue chain is Large-conductance mechanosensitive channel (144 aa).

2 consecutive transmembrane segments (helical) span residues 16–36 and 86–106; these read VIDL…VDSV and GNFL…FLMV.

It belongs to the MscL family. As to quaternary structure, homopentamer.

Its subcellular location is the cell inner membrane. Its function is as follows. Channel that opens in response to stretch forces in the membrane lipid bilayer. May participate in the regulation of osmotic pressure changes within the cell. The chain is Large-conductance mechanosensitive channel from Cupriavidus pinatubonensis (strain JMP 134 / LMG 1197) (Cupriavidus necator (strain JMP 134)).